The following is a 107-amino-acid chain: uncharacterized protein (107 aa).

This is an uncharacterized protein from Saccharomyces cerevisiae (strain ATCC 204508 / S288c) (Baker's yeast).